The primary structure comprises 120 residues: Holo-[acyl-carrier-protein] synthase (120 aa).

Mg(2+) is bound by residues Asp8 and Glu60.

Belongs to the P-Pant transferase superfamily. AcpS family. The cofactor is Mg(2+).

Its subcellular location is the cytoplasm. The enzyme catalyses apo-[ACP] + CoA = holo-[ACP] + adenosine 3',5'-bisphosphate + H(+). Its function is as follows. Transfers the 4'-phosphopantetheine moiety from coenzyme A to a Ser of acyl-carrier-protein. The sequence is that of Holo-[acyl-carrier-protein] synthase from Anaplasma marginale (strain Florida).